A 118-amino-acid polypeptide reads, in one-letter code: Phospholipase A2 'basic' (118 aa).

Intrachain disulfides connect cysteine 11–cysteine 70, cysteine 26–cysteine 117, cysteine 28–cysteine 44, cysteine 43–cysteine 98, cysteine 50–cysteine 91, cysteine 59–cysteine 84, and cysteine 77–cysteine 89. Ca(2+) contacts are provided by tyrosine 27, glycine 29, and glycine 31. Histidine 47 is an active-site residue. Aspartate 48 contributes to the Ca(2+) binding site. A Coagulation factor Xa binding motif motif is present at residues glutamate 52 to lysine 69. The active site involves aspartate 92.

This sequence belongs to the phospholipase A2 family. Group I subfamily. D49 sub-subfamily. The cofactor is Ca(2+). Expressed by the venom gland.

It is found in the secreted. It catalyses the reaction a 1,2-diacyl-sn-glycero-3-phosphocholine + H2O = a 1-acyl-sn-glycero-3-phosphocholine + a fatty acid + H(+). Its function is as follows. Snake venom phospholipase A2 (PLA2) that shows strong anticoagulant activity. Binds directly with the coagulation factor FXa (F10) and blocks the formation of the prothombinase complex. Acts by a nonenzymatic mechanism. Also inhibits the complex composed of tissue factor (F3) and coagulation factor VIIa (F7) (TF-VIIa complex) by both enzymatic and nonenzymatic mechanisms. PLA2 catalyzes the calcium-dependent hydrolysis of the 2-acyl groups in 3-sn-phosphoglycerides. The polypeptide is Phospholipase A2 'basic' (Naja nigricollis (Black-necked spitting cobra)).